The following is a 465-amino-acid chain: L-cystine uptake protein TcyP (465 aa).

The next 10 helical transmembrane spans lie at 3 to 23 (LFLT…LFYM), 34 to 54 (VLLA…FFAP), 73 to 93 (YVRF…LSAF), 105 to 125 (ISAL…AIGI), 184 to 204 (PTSA…YLGV), 224 to 246 (AIIM…AIMT), 263 to 283 (FVLA…IILA), 338 to 358 (LSIG…VMIA), 370 to 390 (FILL…GVGG), and 394 to 414 (FAAI…GLLI).

It belongs to the dicarboxylate/amino acid:cation symporter (DAACS) (TC 2.A.23) family.

It is found in the membrane. Mediates uptake of L-cystine, the oxidized form of L-cysteine. The protein is L-cystine uptake protein TcyP of Shouchella clausii (strain KSM-K16) (Alkalihalobacillus clausii).